The chain runs to 88 residues: Alpha-conotoxin GVIIIB (88 aa).

The first 20 residues, 1–20 (MMSKMGAMFVLLLLFTLASS), serve as a signal peptide directing secretion. Residues 21–43 (QQEGDVQARKTRPKSDFYRALPR) constitute a propeptide that is removed on maturation. Threonine amide is present on Thr87.

This sequence belongs to the conotoxin S superfamily. Post-translationally, contains 5 disulfide bonds. In terms of processing, the predominant peptide contains 2 hydroxyprolines, while 2 minor peptides contains 1 and 3 hydroxyprolines. Expressed by the venom duct.

The protein resides in the secreted. Alpha-conotoxins act on postsynaptic membranes, they bind to the nicotinic acetylcholine receptors (nAChR) and thus inhibit them. This toxin shows high activity on alpha-9-alpha-10 (CHRNA9-CHRNA10) (IC(50)=9.79 nM). It also shows weak activity on alpha-3-beta-2 (CHRNA3-CHRNB2) (IC(50)~1 uM), alpha-6/alpha-3-beta-2-beta-3 (CHRNA6/CHRNA3-CHRNB2-CHRNB3) (IC(50)~1 uM). The toxin binds to the same or overlapping binding sites than conotoxin RgIA (AC P0C1D0). The sequence is that of Alpha-conotoxin GVIIIB from Conus geographus (Geography cone).